Consider the following 516-residue polypeptide: MTDIHNHKILILDFGSQYTQLIARRVREVDVFCEIFPHDVAADFIKNYQAKGIILSGGPESVYDSDVKAPEIVFELGVPVLGICYGMQTMVMQHGGEVKGADQSEFGKAIINILNSTNNIFSNMEHEQLVWMSHSDKVTQTGEHFEIIASSTNAPVAAVAHKNKPFFGVQFHPETTHTENGKQIIENFVVNICGCDTLWNIENIIENDIKEIKQKVGTDKVILGLSGGVDSSVVAAILHQAIGDQLTCIFVDTGLLRLNEDDQVMQVFAEHMDINVIRINAKNRFLDALRGICDPEQKRKIIGKLFVDIFDEEAAKIENAKWLAQGTIYSDVIESAGNNQSKAHVIKSHHNVGGLPKEMKLKLLEPLRELFKDEVRKLGLGLGLPYNMLYRHPFPGPGLGVRILGEIKKEYVETLQKADAIFTEELYKHNLYHDVSQAFGVFLPVKSVGVVGDQRRYEYVIALRAVVSIDFMTATWANLPYDFLSLVSNRIVNEVKQVSRVVYDVTGKPPGTIEWE.

Positions 8–198 (KILILDFGSQ…VVNICGCDTL (191 aa)) constitute a Glutamine amidotransferase type-1 domain. Cys-84 (nucleophile) is an active-site residue. Catalysis depends on residues His-172 and Glu-174. Residues 199–391 (WNIENIIEND…LGLPYNMLYR (193 aa)) form the GMPS ATP-PPase domain. 226 to 232 (SGGVDSS) lines the ATP pocket.

As to quaternary structure, homodimer.

It carries out the reaction XMP + L-glutamine + ATP + H2O = GMP + L-glutamate + AMP + diphosphate + 2 H(+). It participates in purine metabolism; GMP biosynthesis; GMP from XMP (L-Gln route): step 1/1. Catalyzes the synthesis of GMP from XMP. The sequence is that of GMP synthase [glutamine-hydrolyzing] from Francisella tularensis subsp. mediasiatica (strain FSC147).